The chain runs to 247 residues: tRNA pseudouridine synthase A (247 aa).

Aspartate 52 functions as the Nucleophile in the catalytic mechanism. A substrate-binding site is contributed by tyrosine 113.

It belongs to the tRNA pseudouridine synthase TruA family. In terms of assembly, homodimer.

The catalysed reaction is uridine(38/39/40) in tRNA = pseudouridine(38/39/40) in tRNA. Its function is as follows. Formation of pseudouridine at positions 38, 39 and 40 in the anticodon stem and loop of transfer RNAs. This chain is tRNA pseudouridine synthase A, found in Sinorhizobium fredii (strain NBRC 101917 / NGR234).